The following is a 484-amino-acid chain: Adenylosuccinate lyase (484 aa).

An N-acetylalanine modification is found at Ala2. Substrate-binding positions include Arg20 to Tyr21, Arg85 to Asp87, and Thr111 to Ser112. At Lys147 the chain carries N6-acetyllysine. The Proton donor/acceptor role is filled by His159. Gln241 lines the substrate pocket. Catalysis depends on Ser289, which acts as the Proton donor/acceptor. Lys295 carries the N6-acetyllysine modification. Residues Arg303, Arg329, Ser334, and Arg338 each contribute to the substrate site. Lys415 is covalently cross-linked (Glycyl lysine isopeptide (Lys-Gly) (interchain with G-Cter in SUMO1)).

Belongs to the lyase 1 family. Adenylosuccinate lyase subfamily. Homotetramer. Residues from neighboring subunits contribute catalytic and substrate-binding residues to each active site.

The catalysed reaction is N(6)-(1,2-dicarboxyethyl)-AMP = fumarate + AMP. The enzyme catalyses (2S)-2-[5-amino-1-(5-phospho-beta-D-ribosyl)imidazole-4-carboxamido]succinate = 5-amino-1-(5-phospho-beta-D-ribosyl)imidazole-4-carboxamide + fumarate. It participates in purine metabolism; AMP biosynthesis via de novo pathway; AMP from IMP: step 2/2. The protein operates within purine metabolism; IMP biosynthesis via de novo pathway; 5-amino-1-(5-phospho-D-ribosyl)imidazole-4-carboxamide from 5-amino-1-(5-phospho-D-ribosyl)imidazole-4-carboxylate: step 2/2. Catalyzes two non-sequential steps in de novo AMP synthesis: converts (S)-2-(5-amino-1-(5-phospho-D-ribosyl)imidazole-4-carboxamido)succinate (SAICAR) to fumarate plus 5-amino-1-(5-phospho-D-ribosyl)imidazole-4-carboxamide, and thereby also contributes to de novo IMP synthesis, and converts succinyladenosine monophosphate (SAMP) to AMP and fumarate. In Mus musculus (Mouse), this protein is Adenylosuccinate lyase (Adsl).